The chain runs to 474 residues: Glutamyl-tRNA(Gln) amidotransferase subunit A (474 aa).

Catalysis depends on charge relay system residues Lys-76 and Ser-151. Ser-175 functions as the Acyl-ester intermediate in the catalytic mechanism.

It belongs to the amidase family. GatA subfamily. Heterotrimer of A, B and C subunits.

It catalyses the reaction L-glutamyl-tRNA(Gln) + L-glutamine + ATP + H2O = L-glutaminyl-tRNA(Gln) + L-glutamate + ADP + phosphate + H(+). Its function is as follows. Allows the formation of correctly charged Gln-tRNA(Gln) through the transamidation of misacylated Glu-tRNA(Gln) in organisms which lack glutaminyl-tRNA synthetase. The reaction takes place in the presence of glutamine and ATP through an activated gamma-phospho-Glu-tRNA(Gln). This is Glutamyl-tRNA(Gln) amidotransferase subunit A from Chlorobium limicola (strain DSM 245 / NBRC 103803 / 6330).